The chain runs to 653 residues: Fructose-1,6-bisphosphatase class 3 2 (653 aa).

Belongs to the FBPase class 3 family. Mn(2+) serves as cofactor.

It carries out the reaction beta-D-fructose 1,6-bisphosphate + H2O = beta-D-fructose 6-phosphate + phosphate. It participates in carbohydrate biosynthesis; gluconeogenesis. The sequence is that of Fructose-1,6-bisphosphatase class 3 2 from Clostridium beijerinckii (strain ATCC 51743 / NCIMB 8052) (Clostridium acetobutylicum).